Here is a 308-residue protein sequence, read N- to C-terminus: Acyltransferase drtE (308 aa).

In terms of domain architecture, AB hydrolase-1 spans 35–159 (PALVMNPGYN…AAEAKDNFSR (125 aa)).

It belongs to the polyketide transferase af380 family.

It participates in secondary metabolite biosynthesis; terpenoid biosynthesis. Acyltransferase; part of the gene cluster that mediates the biosynthesis of various drimane-type sesquiterpene esters, compounds that exhibit diverse biological activities and are widely present in eukaryotes. The pathway begins with the synthesis of the backbone drimenol by the terpene cyclase drtB using farnesyl pyrophosphate (FPP) as substrate. The cytochrome P450 monooxygenase drtD is then responsible for the hydroxylations at C-6, C-9 and C-12, as well as the oxidation of hydroxyl groups at C-6 and C-11 to a ketone and an aldehyde, respectively. Then, the biosynthesis can go in two directions, either the hydroxylated drimenol is further hydroxylated at C-2 and C-3 by an enzyme(s) not associated with the drt cluster, or the FAD-binding oxidoreductase drtC further oxidizes C-11 or C-12 to form the butyrolactone ring. DrtB, drtD and drtC are solely responsible for the formation of the different drimane structures observed during drimane sesquiterpenes biosynthesis. The polyketide synthase drtA synthesizes different lengths (C6 and C8) of PKS chains, which are then oxidized to varying degrees by the short-chain dehydrogenase drtF. Finally, these PKS chains are transferred onto drimane sesquiterpenes by the acyltransferase drtE, forming the sesquiterpene esters. In addition to the different fatty acyl-CoA chains produced by drtA, drtE is also able to use cinnamoyl-CoA as a substrate. The protein is Acyltransferase drtE of Aspergillus calidoustus.